The following is a 151-amino-acid chain: S-ribosylhomocysteine lyase (151 aa).

The Fe cation site is built by H54, H58, and C121.

It belongs to the LuxS family. Homodimer. It depends on Fe cation as a cofactor.

It catalyses the reaction S-(5-deoxy-D-ribos-5-yl)-L-homocysteine = (S)-4,5-dihydroxypentane-2,3-dione + L-homocysteine. Its function is as follows. Involved in the synthesis of autoinducer 2 (AI-2) which is secreted by bacteria and is used to communicate both the cell density and the metabolic potential of the environment. The regulation of gene expression in response to changes in cell density is called quorum sensing. Catalyzes the transformation of S-ribosylhomocysteine (RHC) to homocysteine (HC) and 4,5-dihydroxy-2,3-pentadione (DPD). The protein is S-ribosylhomocysteine lyase of Clostridium perfringens (strain ATCC 13124 / DSM 756 / JCM 1290 / NCIMB 6125 / NCTC 8237 / Type A).